The sequence spans 504 residues: MPATSMEELVSLCKRRGFIFQGSEIYGGLQGFWDYGPLGVELKNNIKASWWRANVYERDDMEGLDAAIIMHRLVLRHSGHEATFSDPMVDNRKTKKRYRLDHLVKDQKPDVVAQVAEGIGESVENFAAVVAALVAHPAKAAEVLVAAGVRDPFSGEVGDWTEPRPFNMMFKTSIGPVADEDSFGYLRPETAQGIFTNFKNVVDSTSRRLPFGIAQIGKAFRNEITPRNFIFRVRELEQMEIEFFCTPGTDEAWHQHWLEARLAWWEAQGIPREKIQILDVPKEDLAHYSKRTYDLMYNYPTLGYEEIEGIANRTDFDLGSHTKAQAELGIQARVEENFDSVAKLTIPHPETNKPVVPFVIEPSAGVDRAMLAVLAEAYTKETLENGSERIVLKLKPHLAPIKVAVIPLARNREEITSVAKAIKAKLQSLGLGRVLYEDSGNIGKAYRRHDEVGTPYCVTVDFETVGKGEDPALTDTVTVRDRDTLGQERVRISELANWLQARLR.

Substrate is bound by residues arginine 99 and glutamate 189. ATP contacts are provided by residues 221–223, 231–236, 306–307, and 365–368; these read RNE, FRVREL, EI, and GVDR. Residue 236 to 240 participates in substrate binding; the sequence is LEQME. Position 361–365 (361–365) interacts with substrate; that stretch reads EPSAG.

This sequence belongs to the class-II aminoacyl-tRNA synthetase family. In terms of assembly, homodimer.

It is found in the cytoplasm. The catalysed reaction is tRNA(Gly) + glycine + ATP = glycyl-tRNA(Gly) + AMP + diphosphate. Functionally, catalyzes the attachment of glycine to tRNA(Gly). In Deinococcus geothermalis (strain DSM 11300 / CIP 105573 / AG-3a), this protein is Glycine--tRNA ligase.